The primary structure comprises 685 residues: Sodium-dependent phosphate transporter 1-B (685 aa).

Helical transmembrane passes span 21–41 (IMAP…VLAF), 66–86 (ACIL…AKVS), 106–126 (LMAG…AASF), 162–182 (IVLS…LLFF), 207–227 (ACTI…LLGF), and 234–254 (GIIL…WFFV). Residues 489–511 (EGCIEDVVTDRKSSSSSLEERHD) are disordered. Residues 496–511 (VTDRKSSSSSLEERHD) show a composition bias toward basic and acidic residues. A run of 4 helical transmembrane segments spans residues 517–537 (VSLL…FAHG), 565–585 (ATPI…LWVW), 606–626 (FSIE…GLPI), and 656–676 (IFLA…GIMA).

This sequence belongs to the inorganic phosphate transporter (PiT) (TC 2.A.20) family.

It localises to the membrane. Its function is as follows. Sodium-phosphate symporter which plays a fundamental housekeeping role in phosphate transport. The sequence is that of Sodium-dependent phosphate transporter 1-B (slc20a1-b) from Xenopus laevis (African clawed frog).